We begin with the raw amino-acid sequence, 67 residues long: Large ribosomal subunit protein bL35 (67 aa).

A compositionally biased stretch (basic residues) spans 1 to 16; sequence MPKMKTKSGAKKRFRV. A disordered region spans residues 1–25; the sequence is MPKMKTKSGAKKRFRVRPGGTVKRG.

The protein belongs to the bacterial ribosomal protein bL35 family.

This Polaromonas sp. (strain JS666 / ATCC BAA-500) protein is Large ribosomal subunit protein bL35.